The sequence spans 323 residues: Protease Do-like 5, chloroplastic (323 aa).

The N-terminal 28 residues, 1–28, are a transit peptide targeting the chloroplast; the sequence is MTMALASSKAFSSIFNTLSPINQSKFVL. A thylakoid-targeting transit peptide spans 29–73; it reads ACSGSNHVDVIDRRRRIMIFGSSLALTSSLLGSNQQRLPMESAIA. Residues H147, D188, and S266 each act as charge relay system in the active site. A serine protease region spans residues 186–283; it reads DNDLAVLKIE…YGHTIGVNTA (98 aa).

Belongs to the peptidase S1C family.

It localises to the plastid. The protein resides in the chloroplast thylakoid lumen. Functionally, probable serine protease. This is Protease Do-like 5, chloroplastic (DEGP5) from Arabidopsis thaliana (Mouse-ear cress).